Here is a 369-residue protein sequence, read N- to C-terminus: UDP-3-O-(3-hydroxymyristoyl)glucosamine N-acyltransferase (369 aa).

His240 (proton acceptor) is an active-site residue.

Belongs to the transferase hexapeptide repeat family. LpxD subfamily. In terms of assembly, homotrimer.

The enzyme catalyses a UDP-3-O-[(3R)-3-hydroxyacyl]-alpha-D-glucosamine + a (3R)-hydroxyacyl-[ACP] = a UDP-2-N,3-O-bis[(3R)-3-hydroxyacyl]-alpha-D-glucosamine + holo-[ACP] + H(+). It catalyses the reaction UDP-3-O-[(3R)-3-hydroxytetradecanoyl]-alpha-D-glucosamine + (3R)-hydroxytetradecanoyl-[ACP] = UDP-2-N,3-O-bis[(3R)-3-hydroxytetradecanoyl]-alpha-D-glucosamine + holo-[ACP] + H(+). It functions in the pathway glycolipid biosynthesis; lipid IV(A) biosynthesis; lipid IV(A) from (3R)-3-hydroxytetradecanoyl-[acyl-carrier-protein] and UDP-N-acetyl-alpha-D-glucosamine: step 3/6. In terms of biological role, catalyzes the N-acylation of UDP-3-O-(hydroxytetradecanoyl)glucosamine using 3-hydroxytetradecanoyl-ACP as the acyl donor. Is involved in the biosynthesis of lipid A, a phosphorylated glycolipid that anchors the lipopolysaccharide to the outer membrane of the cell. This is UDP-3-O-(3-hydroxymyristoyl)glucosamine N-acyltransferase from Blochmanniella floridana.